We begin with the raw amino-acid sequence, 438 residues long: Aspartate--tRNA(Asp/Asn) ligase (438 aa).

Residue E176 participates in L-aspartate binding. The aspartate stretch occupies residues 198 to 201 (QLYK). Residue R220 coordinates L-aspartate. Residues 220–222 (RAE), 228–230 (RHL), and E361 contribute to the ATP site. Positions 361 and 364 each coordinate Mg(2+). L-aspartate contacts are provided by S364 and R368. 409–412 (GIER) is an ATP binding site.

The protein belongs to the class-II aminoacyl-tRNA synthetase family. Type 2 subfamily. As to quaternary structure, homodimer. Mg(2+) is required as a cofactor.

It is found in the cytoplasm. It carries out the reaction tRNA(Asx) + L-aspartate + ATP = L-aspartyl-tRNA(Asx) + AMP + diphosphate. In terms of biological role, aspartyl-tRNA synthetase with relaxed tRNA specificity since it is able to aspartylate not only its cognate tRNA(Asp) but also tRNA(Asn). Reaction proceeds in two steps: L-aspartate is first activated by ATP to form Asp-AMP and then transferred to the acceptor end of tRNA(Asp/Asn). This Methanococcus aeolicus (strain ATCC BAA-1280 / DSM 17508 / OCM 812 / Nankai-3) protein is Aspartate--tRNA(Asp/Asn) ligase.